Reading from the N-terminus, the 560-residue chain is NAD-dependent malic enzyme (560 aa).

Tyrosine 100 serves as the catalytic Proton donor. Arginine 153 is a binding site for NAD(+). Lysine 171 acts as the Proton acceptor in catalysis. Residues glutamate 242, aspartate 243, and aspartate 266 each contribute to the a divalent metal cation site. Residues aspartate 266 and asparagine 413 each contribute to the NAD(+) site.

Belongs to the malic enzymes family. As to quaternary structure, homotetramer. Requires Mg(2+) as cofactor. It depends on Mn(2+) as a cofactor.

The enzyme catalyses (S)-malate + NAD(+) = pyruvate + CO2 + NADH. The catalysed reaction is oxaloacetate + H(+) = pyruvate + CO2. The protein is NAD-dependent malic enzyme of Psychromonas ingrahamii (strain DSM 17664 / CCUG 51855 / 37).